The chain runs to 118 residues: MARGMKLACVVLVICMVVIAPMAEGAISCGAVTSDLSPCLTYLTGGPGPSPQCCGGVKKLLAAANTTPDRQAACNCLKSAAGSITKLNTNNAAALPGKCGVNIPYKISTTTNCNTVKF.

A signal peptide spans 1-25 (MARGMKLACVVLVICMVVIAPMAEG). Disulfide bonds link Cys29-Cys76, Cys39-Cys53, Cys54-Cys99, and Cys74-Cys113.

This sequence belongs to the plant LTP family.

In terms of biological role, plant non-specific lipid-transfer proteins transfer phospholipids as well as galactolipids across membranes. May play a role in wax or cutin deposition in the cell walls of expanding epidermal cells and certain secretory tissues. Binds saturated fatty acids, jasmonic acid and, with highest efficiency, unsaturated fatty acids and lysolipids. The polypeptide is Non-specific lipid-transfer protein 2 (Lens culinaris (Lentil)).